A 355-amino-acid chain; its full sequence is MSTFAIPRSVEWHETHVTILNQQKLPSVTEYLDLHTLEDVHDAIVTLKVRGAPAIGITAAYGLALAASRYETESVDEFQRRLKQDRDYLASARPTAVNLFWALDRLVAAAKSAASVNEAKTTLVHEAIRIQIEDEDVCRRIGEHALSLFHRGDRIMTICNAGSIATARYGTALAPFYLAKEKGIELSVYALETRPVLQGARLTAWELMQAGVDVTLITDNMAAQTIKAKNINAIIVGADRIAQNGDTANKIGTFGLALLAQSFGIPFYVAAPLSTIDLATKTGADIPIEERHPDEVTHLNGVRIAPEGVNVYNPAFDVTPNELITAIITEKGIVYGDYETELPSLVAKEEHHETA.

Substrate is bound by residues 50–52, arginine 93, and glutamine 198; that span reads RGA. Aspartate 239 (proton donor) is an active-site residue. 249–250 serves as a coordination point for substrate; the sequence is NK.

The protein belongs to the eIF-2B alpha/beta/delta subunits family. MtnA subfamily. Homodimer.

The catalysed reaction is 5-(methylsulfanyl)-alpha-D-ribose 1-phosphate = 5-(methylsulfanyl)-D-ribulose 1-phosphate. Its pathway is amino-acid biosynthesis; L-methionine biosynthesis via salvage pathway; L-methionine from S-methyl-5-thio-alpha-D-ribose 1-phosphate: step 1/6. Catalyzes the interconversion of methylthioribose-1-phosphate (MTR-1-P) into methylthioribulose-1-phosphate (MTRu-1-P). This is Methylthioribose-1-phosphate isomerase from Geobacillus thermodenitrificans (strain NG80-2).